A 198-amino-acid chain; its full sequence is Glycerol-3-phosphate acyltransferase (198 aa).

A run of 6 helical transmembrane segments spans residues 1–21 (MNLLILFFGYLFGSFPSGYLA), 55–75 (VFLLDVFKGVLSILLAKYLLL), 79–99 (WQVAVGLSTLIGHIWPVWLNW), 111–131 (IFLGLSWQVGLATLGVFIIMI), 136–156 (IVSLASVSASLALPLIMFLSF), and 158–178 (GSNLSLPFLIVSLLAMILVIW).

This sequence belongs to the PlsY family. Probably interacts with PlsX.

The protein resides in the cell inner membrane. The enzyme catalyses an acyl phosphate + sn-glycerol 3-phosphate = a 1-acyl-sn-glycero-3-phosphate + phosphate. The protein operates within lipid metabolism; phospholipid metabolism. Catalyzes the transfer of an acyl group from acyl-phosphate (acyl-PO(4)) to glycerol-3-phosphate (G3P) to form lysophosphatidic acid (LPA). This enzyme utilizes acyl-phosphate as fatty acyl donor, but not acyl-CoA or acyl-ACP. The sequence is that of Glycerol-3-phosphate acyltransferase from Prochlorococcus marinus (strain NATL2A).